Reading from the N-terminus, the 581-residue chain is Colicin-E2 (581 aa).

Disordered stretches follow at residues 1–74, 242–269, 293–320, 421–488, and 513–566; these read MSGG…SGGG, QTLS…NTRD, PDQV…EAAE, ADAA…IADK, and DLSK…MNNI. Over residues 20 to 35 the composition is skewed to gly residues; the sequence is INGGPTGLGVGGGASD. The span at 36–45 shows a compositional bias: low complexity; that stretch reads GSGWSSENNP. Residues 46–74 show a composition bias toward gly residues; it reads WGGGSGSGIHWGGGSGHGNGGGNGNSGGG. A compositionally biased stretch (polar residues) spans 242–251; that stretch reads QTLSPGVTNN. 3 stretches are compositionally biased toward basic and acidic residues: residues 296 to 320, 429 to 452, and 464 to 475; these read VKQR…EAAE, QERR…ESKR, and PVGDKWLDDAGK. Residues 518–527 show a composition bias toward polar residues; sequence FKGSNKTNIQ. The segment covering 535–554 has biased composition (basic and acidic residues); sequence RKKDQVGGRERFELHHDKPI. Zn(2+) contacts are provided by H549, H574, and H578.

This sequence belongs to the colicin/pyosin nuclease family.

In terms of biological role, this plasmid-coded bactericidal protein is an endonuclease active on both single- and double-stranded DNA but with undefined specificity. Functionally, colicins are polypeptide toxins produced by and active against E.coli and closely related bacteria. This chain is Colicin-E2 (col), found in Escherichia coli.